The primary structure comprises 293 residues: Pyridoxal 5'-phosphate synthase subunit PdxS (293 aa).

Asp-25 lines the D-ribose 5-phosphate pocket. Catalysis depends on Lys-82, which acts as the Schiff-base intermediate with D-ribose 5-phosphate. Residue Asp-103 participates in D-ribulose 5-phosphate binding. Gly-154 is a binding site for D-ribose 5-phosphate. Arg-166 lines the D-glyceraldehyde 3-phosphate pocket. Residues Gly-215 and 236 to 237 contribute to the D-ribose 5-phosphate site; that span reads GS.

This sequence belongs to the PdxS/SNZ family. As to quaternary structure, homohexamer and homododecamer. In the presence of PdxT, forms a dodecamer of heterodimers.

It carries out the reaction aldehydo-D-ribose 5-phosphate + D-glyceraldehyde 3-phosphate + L-glutamine = pyridoxal 5'-phosphate + L-glutamate + phosphate + 3 H2O + H(+). It functions in the pathway cofactor biosynthesis; pyridoxal 5'-phosphate biosynthesis. Functionally, catalyzes the formation of pyridoxal 5'-phosphate from ribose 5-phosphate (RBP), glyceraldehyde 3-phosphate (G3P) and ammonia. The ammonia is provided by the PdxT subunit. Can also use ribulose 5-phosphate and dihydroxyacetone phosphate as substrates, resulting from enzyme-catalyzed isomerization of RBP and G3P, respectively. The sequence is that of Pyridoxal 5'-phosphate synthase subunit PdxS from Thermotoga maritima (strain ATCC 43589 / DSM 3109 / JCM 10099 / NBRC 100826 / MSB8).